The chain runs to 592 residues: Aspartate--tRNA(Asp/Asn) ligase (592 aa).

Glutamate 172 contributes to the L-aspartate binding site. Positions 196-199 (QLFK) are aspartate. Arginine 218 lines the L-aspartate pocket. ATP is bound by residues 218–220 (RDE) and glutamine 227. An L-aspartate-binding site is contributed by histidine 450. Glutamate 484 contacts ATP. An L-aspartate-binding site is contributed by arginine 491. 536 to 539 (GLDR) is a binding site for ATP.

Belongs to the class-II aminoacyl-tRNA synthetase family. Type 1 subfamily. Homodimer.

Its subcellular location is the cytoplasm. It carries out the reaction tRNA(Asx) + L-aspartate + ATP = L-aspartyl-tRNA(Asx) + AMP + diphosphate. Functionally, aspartyl-tRNA synthetase with relaxed tRNA specificity since it is able to aspartylate not only its cognate tRNA(Asp) but also tRNA(Asn). Reaction proceeds in two steps: L-aspartate is first activated by ATP to form Asp-AMP and then transferred to the acceptor end of tRNA(Asp/Asn). The protein is Aspartate--tRNA(Asp/Asn) ligase of Thioalkalivibrio sulfidiphilus (strain HL-EbGR7).